The primary structure comprises 301 residues: Syntaxin-17 (301 aa).

The residue at position 2 (S2) is an N-acetylserine. Residues 2 to 227 (SEDEEKVKLR…KNLQKAAKYK (226 aa)) lie on the Cytoplasmic side of the membrane. Residue K41 is modified to N6-acetyllysine. Residues 49–128 (DKLHEEHINA…QVKNEEALLQ (80 aa)) adopt a coiled-coil conformation. Phosphotyrosine; by ABL1 is present on Y156. A t-SNARE coiled-coil homology domain is found at 161–223 (IPRDQNAAES…EEGTKNLQKA (63 aa)). A helical transmembrane segment spans residues 228–248 (LAALPVAGAVIGGVVGGPIGL). The necessary and sufficient for localization to autophagosome stretch occupies residues 228-274 (LAALPVAGAVIGGVVGGPIGLLAGFKVAGIAAALGGGVLGFTGGKLI). Residues 249–253 (LAGFK) lie on the Lumenal side of the membrane. Residues 254 to 274 (VAGIAAALGGGVLGFTGGKLI) form a helical membrane-spanning segment. A required for interaction with COPB1, TMED9 and TMED10 region spans residues 273–301 (LIQRRKQKMMEKLTSSCPDLPSQSDKKCS). At 275-301 (QRRKQKMMEKLTSSCPDLPSQSDKKCS) the chain is on the cytoplasmic side. At S288 the chain carries Phosphoserine. Positions 298–301 (KKCS) match the Endoplasmic reticulum retention signal motif.

It belongs to the syntaxin family. As to quaternary structure, forms a SNARE complex composed of VAMP8, SNAP29 and STX17 involved in fusion of autophagosome with lysosome. May interact with VAMP7. May interact with VTI1B. Probably interacts with BET1, SCFD1 and SEC22B. Interacts with PTPN2 and ABL1; involved in STX17 phosphorylation. Interacts with COPB1. Interacts with TMED9 and TMED10; the interaction is direct. Interacts with RUBCNL/PACER; promoting targeting of RUBCNL/PACER to autophagosome. Interacts with VAMP8, SNAP29, VPS39 and VPS41; these interactions are increased in the absence of TMEM39A. Interacts with IRGM; promoting STX17 recruitment to autophagosomes. Interacts with ATG8 proteins GABARAP and MAP1LC3B. Interacts with RNF115; this interaction enhances STX17 stability which in turn promotes autophagosome maturation. Interacts with RAB39A (GTP-bound); the interaction promotes autophagosome-lysosome membrane fusion driven by STX17-SNAP29-VAMP8. Interacts with RAB39B; the interaction may promote a different fonction in autophagy as compared with RAB39A. Post-translationally, phosphorylated at Tyr-156 probably by ABL1. Dephosphorylation by PTPN2; regulates exit from the endoplasmic reticulum. As to expression, detected in all tissues examined with higher expression in steroidogenic tissues including testis and adrenal gland (at protein level). Highly expressed in liver and testis. Also found in brain, heart, kidney, lung, placenta, skeletal muscle and spleen.

The protein resides in the endoplasmic reticulum membrane. It is found in the smooth endoplasmic reticulum membrane. Its subcellular location is the endoplasmic reticulum-Golgi intermediate compartment membrane. It localises to the cytoplasmic vesicle. The protein localises to the autophagosome membrane. The protein resides in the COPII-coated vesicle membrane. It is found in the cytoplasm. Its subcellular location is the cytosol. It localises to the mitochondrion membrane. The protein localises to the autolysosome membrane. In terms of biological role, SNAREs, soluble N-ethylmaleimide-sensitive factor-attachment protein receptors, are essential proteins for fusion of cellular membranes. SNAREs localized on opposing membranes assemble to form a trans-SNARE complex, an extended, parallel four alpha-helical bundle that drives membrane fusion. STX17 is a SNARE of the autophagosome involved in autophagy through the direct control of autophagosome membrane fusion with the lysosome membrane. May also play a role in the early secretory pathway where it may maintain the architecture of the endoplasmic reticulum-Golgi intermediate compartment/ERGIC and Golgi and/or regulate transport between the endoplasmic reticulum, the ERGIC and the Golgi. This chain is Syntaxin-17, found in Rattus norvegicus (Rat).